Reading from the N-terminus, the 301-residue chain is Ribosomal RNA small subunit methyltransferase H (301 aa).

S-adenosyl-L-methionine is bound by residues 35-37, aspartate 55, phenylalanine 84, aspartate 105, and glutamine 112; that span reads GGH.

This sequence belongs to the methyltransferase superfamily. RsmH family.

The protein resides in the cytoplasm. It carries out the reaction cytidine(1402) in 16S rRNA + S-adenosyl-L-methionine = N(4)-methylcytidine(1402) in 16S rRNA + S-adenosyl-L-homocysteine + H(+). Functionally, specifically methylates the N4 position of cytidine in position 1402 (C1402) of 16S rRNA. The polypeptide is Ribosomal RNA small subunit methyltransferase H (Chloroflexus aurantiacus (strain ATCC 29366 / DSM 635 / J-10-fl)).